A 267-amino-acid chain; its full sequence is Non-homologous end joining protein Ku (267 aa).

Positions 10-190 constitute a Ku domain; that stretch reads ISFGLVSFPV…TKYTAKELEL (181 aa).

This sequence belongs to the prokaryotic Ku family. Homodimer. Interacts with LigD.

Its function is as follows. With LigD forms a non-homologous end joining (NHEJ) DNA repair enzyme, which repairs dsDNA breaks with reduced fidelity. Binds linear dsDNA with 5'- and 3'- overhangs but not closed circular dsDNA nor ssDNA. Recruits and stimulates the ligase activity of LigD. The protein is Non-homologous end joining protein Ku of Solibacter usitatus (strain Ellin6076).